The sequence spans 715 residues: Putative pentatricopeptide repeat-containing protein At3g23330 (715 aa).

PPR repeat units lie at residues 38-68 (SHTS…LKSP), 69-103 (PVLA…GRCP), 104-138 (DHNV…GMDC), 139-172 (DLYT…MPQR), 206-240 (DVVS…DLKP), 241-275 (DSFT…GIDS), 276-306 (DVYI…LYCR), 307-341 (DGIS…KVKP), 342-376 (GAVA…GFGS), 377-407 (NIFI…MNVL), 408-442 (DEVS…GVKP), 443-473 (NQVA…MTKV), and 479-509 (ELEH…MCVE). Residues 514-589 (VWSTLLSSCS…KPACSWIEMK (76 aa)) form a type E motif region. The tract at residues 590-620 (NKTHGFVSGDRSHPSMDKINEFLKAVMEQME) is type E(+) motif. The tract at residues 621–715 (KEGYVADTSG…RGNCSCGDYW (95 aa)) is type DYW motif.

The protein belongs to the PPR family. PCMP-H subfamily.

This is Putative pentatricopeptide repeat-containing protein At3g23330 (PCMP-H32) from Arabidopsis thaliana (Mouse-ear cress).